The sequence spans 600 residues: Long-chain-fatty-acid--CoA ligase FadD15 (600 aa).

This sequence belongs to the ATP-dependent AMP-binding enzyme family.

The enzyme catalyses a long-chain fatty acid + ATP + CoA = a long-chain fatty acyl-CoA + AMP + diphosphate. It functions in the pathway lipid metabolism; fatty acid biosynthesis. Catalyzes the activation of long-chain fatty acids as acyl-coenzyme A (acyl-CoA), which are then transferred to the multifunctional polyketide synthase (PKS) type III for further chain extension. In Mycobacterium bovis (strain ATCC BAA-935 / AF2122/97), this protein is Long-chain-fatty-acid--CoA ligase FadD15 (fadD15).